The primary structure comprises 418 residues: Light-independent protochlorophyllide reductase subunit N (418 aa).

Cysteine 17, cysteine 42, and cysteine 103 together coordinate [4Fe-4S] cluster.

This sequence belongs to the BchN/ChlN family. As to quaternary structure, protochlorophyllide reductase is composed of three subunits; ChlL, ChlN and ChlB. Forms a heterotetramer of two ChlB and two ChlN subunits. The cofactor is [4Fe-4S] cluster.

The enzyme catalyses chlorophyllide a + oxidized 2[4Fe-4S]-[ferredoxin] + 2 ADP + 2 phosphate = protochlorophyllide a + reduced 2[4Fe-4S]-[ferredoxin] + 2 ATP + 2 H2O. It functions in the pathway porphyrin-containing compound metabolism; chlorophyll biosynthesis (light-independent). Component of the dark-operative protochlorophyllide reductase (DPOR) that uses Mg-ATP and reduced ferredoxin to reduce ring D of protochlorophyllide (Pchlide) to form chlorophyllide a (Chlide). This reaction is light-independent. The NB-protein (ChlN-ChlB) is the catalytic component of the complex. The sequence is that of Light-independent protochlorophyllide reductase subunit N from Prochlorococcus marinus (strain AS9601).